A 198-amino-acid polypeptide reads, in one-letter code: MPMQDHKYFYLYSITNKTTEKIYVGVHKTSNLDDGYMGSGVAIKNAIKKYGIDNFYKHIIKFFESEKAMYDAEAEIVTEEFVKSKKTYNMKLGGIGGFPKHNTAGAKNGFYGKSHSRETRLKISIKSSRKRGPRGPRGKTLKMCGANNPRYGKIAPNAKSVIINGVLYKSIKIAAKALNINYSTLKGRVKAGYYKCQD.

Residues 7–90 (KYFYLYSITN…FVKSKKTYNM (84 aa)) form the GIY-YIG domain.

It to endonucleases of group I introns of fungi and phage. Mg(2+) is required as a cofactor.

In terms of biological role, probably involved in the movement of the endonuclease-encoding DNA. The sequence is that of Putative endonuclease segC (segC) from Escherichia coli (Bacteriophage T4).